The chain runs to 453 residues: Armadillo repeat-containing X-linked protein 1 (453 aa).

Over 1–6 (MGRTRE) the chain is Mitochondrial intermembrane. Mitochondrion outer membrane (MOM)-targeting sequence regions lie at residues 1–6 (MGRTRE) and 26–36 (RLAWGRDENEK). The chain crosses the membrane as a helical; Signal-anchor span at residues 7–29 (AGCVAAGVVIGAGACYCVYRLAW). Over 30 to 453 (GRDENEKIWD…VKVLKVLTKL (424 aa)) the chain is Cytoplasmic. Disordered stretches follow at residues 58–77 (AKTN…SEVK) and 132–182 (ISGN…RAPA). Residues 167-177 (GKSKGKARSKS) are compositionally biased toward basic residues. 4 ARM repeats span residues 195-235 (PYKI…NNAA), 237-276 (SFNQ…NLSV), 358-398 (PAMT…NIND), and 415-453 (SSLF…LTKL).

This sequence belongs to the eutherian X-chromosome-specific Armcx family. As to quaternary structure, interacts with MIRO1. As to expression, expressed at high levels ovary, heart, testis, prostate, brain, spleen and colon. Expressed at very low levels in liver and thymus. Not expressed in peripheral blood leukocytes. Not or reduced expressed in lung, prostate, colon, pancreas and ovarian carcinomas.

It localises to the mitochondrion. Its subcellular location is the mitochondrion outer membrane. Its function is as follows. Regulates mitochondrial transport during axon regeneration. Increases the proportion of motile mitochondria by recruiting stationary mitochondria into the motile pool. Enhances mitochondria movement and neurite growth in both adult axons and embryonic neurons. Promotes neuronal survival and axon regeneration after nerve injury. May link mitochondria to the Trak1-kinesin motor complex via its interaction with MIRO1. In Homo sapiens (Human), this protein is Armadillo repeat-containing X-linked protein 1 (ARMCX1).